We begin with the raw amino-acid sequence, 457 residues long: ATP synthase subunit beta (457 aa).

An ATP-binding site is contributed by 147–154 (GGAGVGKT).

Belongs to the ATPase alpha/beta chains family. In terms of assembly, F-type ATPases have 2 components, CF(1) - the catalytic core - and CF(0) - the membrane proton channel. CF(1) has five subunits: alpha(3), beta(3), gamma(1), delta(1), epsilon(1). CF(0) has three main subunits: a(1), b(2) and c(9-12). The alpha and beta chains form an alternating ring which encloses part of the gamma chain. CF(1) is attached to CF(0) by a central stalk formed by the gamma and epsilon chains, while a peripheral stalk is formed by the delta and b chains.

It is found in the cell inner membrane. The catalysed reaction is ATP + H2O + 4 H(+)(in) = ADP + phosphate + 5 H(+)(out). Its function is as follows. Produces ATP from ADP in the presence of a proton gradient across the membrane. The catalytic sites are hosted primarily by the beta subunits. This chain is ATP synthase subunit beta, found in Histophilus somni (strain 2336) (Haemophilus somnus).